Consider the following 201-residue polypeptide: uncharacterized protein (201 aa).

The segment at 53–74 (PKKNTAHKNSTTSTVASSGNTT) is disordered. The span at 59 to 74 (HKNSTTSTVASSGNTT) shows a compositional bias: polar residues. Residues 88–136 (AKRLSHKEVERRRREAISEGIKELANIVPGCEKNKGSILQRTAQYIRSL) enclose the bHLH domain.

Its subcellular location is the nucleus. This is an uncharacterized protein from Schizosaccharomyces pombe (strain 972 / ATCC 24843) (Fission yeast).